Here is a 190-residue protein sequence, read N- to C-terminus: Somatotropin (190 aa).

A Zn(2+)-binding site is contributed by His19. A disulfide bridge connects residues Cys52 and Cys163. Position 105 is a phosphoserine (Ser105). Residue Glu172 coordinates Zn(2+). A disulfide bridge connects residues Cys180 and Cys188.

It belongs to the somatotropin/prolactin family.

The protein resides in the secreted. Plays an important role in growth control. Its major role in stimulating body growth is to stimulate the liver and other tissues to secrete IGF1. It stimulates both the differentiation and proliferation of myoblasts. It also stimulates amino acid uptake and protein synthesis in muscle and other tissues. The polypeptide is Somatotropin (GH1) (Balaenoptera borealis (Sei whale)).